A 339-amino-acid polypeptide reads, in one-letter code: Tetraacyldisaccharide 4'-kinase (339 aa).

58-65 is a binding site for ATP; that stretch reads TVGGSGKT.

This sequence belongs to the LpxK family.

It catalyses the reaction a lipid A disaccharide + ATP = a lipid IVA + ADP + H(+). It participates in glycolipid biosynthesis; lipid IV(A) biosynthesis; lipid IV(A) from (3R)-3-hydroxytetradecanoyl-[acyl-carrier-protein] and UDP-N-acetyl-alpha-D-glucosamine: step 6/6. Its function is as follows. Transfers the gamma-phosphate of ATP to the 4'-position of a tetraacyldisaccharide 1-phosphate intermediate (termed DS-1-P) to form tetraacyldisaccharide 1,4'-bis-phosphate (lipid IVA). The polypeptide is Tetraacyldisaccharide 4'-kinase (Shewanella baltica (strain OS195)).